A 763-amino-acid chain; its full sequence is High glucose sensor RGT2 (763 aa).

The interval 1–28 (MNDSQNCLRQREENSHLNPGNDFGHHQG) is disordered. Topologically, residues 1–99 (MNDSQNCLRQ…PLPLRSNVMS (99 aa)) are cytoplasmic. The helical transmembrane segment at 100-120 (VLVGIFVAVGGFLFGYDTGLI) threads the bilayer. Residues 121 to 144 (NSITDMPYVKTYIAPNHSYFTTSQ) lie on the Extracellular side of the membrane. N136 carries an N-linked (GlcNAc...) asparagine glycan. Residues 145 to 165 (IAILVSFLSLGTFFGALIAPY) traverse the membrane as a helical segment. The Cytoplasmic segment spans residues 166–175 (ISDSYGRKPT). The chain crosses the membrane as a helical span at residues 176-196 (IMFSTAVIFSIGNSLQVASGG). Position 197 (L197) is a topological domain, extracellular. The chain crosses the membrane as a helical span at residues 198–218 (VLLIVGRVISGIGIGIISAVV). Residues 219-231 (PLYQAEAAQKNLR) lie on the Cytoplasmic side of the membrane. Residues 232-252 (GAIISSYQWAITIGLLVSSAV) form a helical membrane-spanning segment. The Extracellular segment spans residues 253 to 266 (SQGTHSKNGPSSYR). The helical transmembrane segment at 267 to 287 (IPIGLQYVWSSILAVGMIFLP) threads the bilayer. At 288-357 (ESPRYYVLKD…SENRPKQILR (70 aa)) the chain is on the cytoplasmic side. A helical membrane pass occupies residues 358-378 (IFTGIAIQAFQQASGINFIFY). Residues 379–393 (YGVNFFNNTGVDNSY) are Extracellular-facing. An N-linked (GlcNAc...) asparagine glycan is attached at N385. Residues 394 to 414 (LVSFISYAVNVAFSIPGMYLV) form a helical membrane-spanning segment. Topologically, residues 415 to 421 (DRIGRRP) are cytoplasmic. The chain crosses the membrane as a helical span at residues 422 to 442 (VLLAGGVIMAIANLVIAIVGV). The Extracellular portion of the chain corresponds to 443 to 452 (SEGKTVVASK). Residues 453–473 (IMIAFICLFIAAFSATWGGVV) form a helical membrane-spanning segment. The Cytoplasmic portion of the chain corresponds to 474-491 (WVVSAELYPLGVRSKCTA). A helical membrane pass occupies residues 492–512 (ICAAANWLVNFTCALITPYIV). Topologically, residues 513-524 (DVGSHTSSMGPK) are extracellular. A helical membrane pass occupies residues 525 to 545 (IFFIWGGLNVVAVIVVYFAVY). The Cytoplasmic portion of the chain corresponds to 546–763 (ETRGLTLEEI…SKHSQYTSPQ (218 aa)). Residues 725–737 (SSTTSNDTSFSPS) are compositionally biased toward low complexity. Positions 725 to 763 (SSTTSNDTSFSPSHNSNARTSSNWTSDLASKHSQYTSPQ) are disordered. The segment covering 738-763 (HNSNARTSSNWTSDLASKHSQYTSPQ) has biased composition (polar residues).

The protein belongs to the major facilitator superfamily. Sugar transporter (TC 2.A.1.1) family. Interacts with YCK1. Interacts with MTH1 and STD1. Phosphorylated in the C-terminal tail on Yck consensus sites in a yeast casein kinases YCK1 and YCK2 (Yck)-dependent manner. This phosphorylation is required for interaction with HXT corepressors MTH1 and STD1 and ultimately HXT expression.

It is found in the cell membrane. Functionally, low-affinity high glucose sensor that is part of the sensor/receptor-repressor (SSR) glucose-signaling pathway, which detects extracellular glucose and induces expression of glucose transporters that bring glucose into the cell. The transporter-like sensor generates an intracellular signal in the presence of high levels of glucose to promote high glucose-induced expression of HXT1. Binding of glucose to the RGT2 transmembrane domain activates a downstream signaling cascade, leading to phosphorylation of the RGT1 corepressors MTH1 and STD1, targeting them for SCF(Grr1)-dependent ubiquitination and degradation. Depletion of the corepressors robs RGT1 of its ability to repress expression of HXT genes, leading to accumulation of glucose transporters in the plasma membrane. Even though RGT2 is similar to glucose transporters, it appears to be unable to transport glucose. The polypeptide is High glucose sensor RGT2 (Saccharomyces cerevisiae (strain ATCC 204508 / S288c) (Baker's yeast)).